A 278-amino-acid polypeptide reads, in one-letter code: Indole-3-glycerol phosphate synthase (278 aa).

The protein belongs to the TrpC family.

The enzyme catalyses 1-(2-carboxyphenylamino)-1-deoxy-D-ribulose 5-phosphate + H(+) = (1S,2R)-1-C-(indol-3-yl)glycerol 3-phosphate + CO2 + H2O. Its pathway is amino-acid biosynthesis; L-tryptophan biosynthesis; L-tryptophan from chorismate: step 4/5. The polypeptide is Indole-3-glycerol phosphate synthase (Stutzerimonas stutzeri (strain A1501) (Pseudomonas stutzeri)).